The primary structure comprises 138 residues: uncharacterized protein (138 aa).

3 consecutive transmembrane segments (helical) span residues 12–32 (LHFL…VLPI), 62–82 (LIAV…FSVL), and 111–131 (FHWV…LICS).

It localises to the cell membrane. This is an uncharacterized protein from Haemophilus influenzae (strain ATCC 51907 / DSM 11121 / KW20 / Rd).